A 90-amino-acid polypeptide reads, in one-letter code: DNA-directed RNA polymerase subunit omega (90 aa).

A disordered region spans residues 69–90 (RQEQQEQEAAELAAVSSIAHTR).

This sequence belongs to the RNA polymerase subunit omega family. As to quaternary structure, the RNAP catalytic core consists of 2 alpha, 1 beta, 1 beta' and 1 omega subunit. When a sigma factor is associated with the core the holoenzyme is formed, which can initiate transcription.

It catalyses the reaction RNA(n) + a ribonucleoside 5'-triphosphate = RNA(n+1) + diphosphate. In terms of biological role, promotes RNA polymerase assembly. Latches the N- and C-terminal regions of the beta' subunit thereby facilitating its interaction with the beta and alpha subunits. The polypeptide is DNA-directed RNA polymerase subunit omega (Vibrio atlanticus (strain LGP32) (Vibrio splendidus (strain Mel32))).